A 26-amino-acid polypeptide reads, in one-letter code: NRLCCSQYGFCGTTSEYCSRVSGCQS.

Residues 1–26 form the Chitin-binding type-1 domain; it reads NRLCCSQYGFCGTTSEYCSRVSGCQS. A disulfide bond links Cys4 and Cys18.

As to expression, seeds (at protein level).

Functionally, chitin-binding protein which functions in defense against chitin-containing fungal pathogens. The polypeptide is Morintide mO4 (Moringa oleifera (Horseradish tree)).